A 417-amino-acid polypeptide reads, in one-letter code: Gamma-glutamyl phosphate reductase (417 aa).

Belongs to the gamma-glutamyl phosphate reductase family.

The protein resides in the cytoplasm. The catalysed reaction is L-glutamate 5-semialdehyde + phosphate + NADP(+) = L-glutamyl 5-phosphate + NADPH + H(+). It participates in amino-acid biosynthesis; L-proline biosynthesis; L-glutamate 5-semialdehyde from L-glutamate: step 2/2. Functionally, catalyzes the NADPH-dependent reduction of L-glutamate 5-phosphate into L-glutamate 5-semialdehyde and phosphate. The product spontaneously undergoes cyclization to form 1-pyrroline-5-carboxylate. This chain is Gamma-glutamyl phosphate reductase, found in Escherichia coli O6:H1 (strain CFT073 / ATCC 700928 / UPEC).